Here is a 166-residue protein sequence, read N- to C-terminus: uncharacterized protein (166 aa).

This is an uncharacterized protein from Saccharomyces cerevisiae (strain ATCC 204508 / S288c) (Baker's yeast).